We begin with the raw amino-acid sequence, 626 residues long: MADSATLDATTVQVLQDLANRLRVHSIRATCASGSGHPTSCCSAAEIVSVLFFHTMRYRQTEPAHPDNDRFVLSKGHAAPLLYAAWVEAGSISEPDLLNLRTIHCDLEGHPTPRLSFVDVATGSLGQGLGAACGMAYTGKYLDKASYRVFCLLGDGESSEGSVWEALAFASHYGLDNLVAVFDVNRLGQSGVAPLKHCTDIYRNRCEAFGWNTYLVDGHDVEALCQAFSQAAQGKNKPTAIIAKTYKGRGIPNVEDAENWHGKPLPKERADEIIRLIKSQIKTNRNLLPKPPVEGSPPVSITNIKMTCLPDYKVGDKVATQKAYGLALAKLGLANERVVVLDGDPKNSTFFEIFKKEHPERFIECFAAEQNMVSVALGCATRGRTITFVTTLGAFLTRAFDQIRMGAISQSNINLIGSHCGVSVGEDGPSQMALEDLAMFRSIPNCTVFLPSDAVSTEHAVYLAANSEGMCFIRTNRSETAVIYTPQEHFEIGRAKVIRHSNNDKVTVIGAGVTLHEALAAADALSQQDISICVIDPFTIKPLDAATIISCAKATDGRVVTVEDHYQEGGIGEAVCAAVSGEPAIHVHQLSVSGVSERNRKPSELLSIFGVSARHIIAAVKYTLMN.

Position 37 (His37) interacts with substrate. Residues Ser40, His77, and 123 to 125 (GSL) contribute to the thiamine diphosphate site. Mg(2+) is bound at residue Asp155. Thiamine diphosphate-binding residues include Gly156 and Asn185. Positions 185 and 187 each coordinate Mg(2+). Thiamine diphosphate-binding residues include Lys247 and His261. His261 and Ser348 together coordinate substrate. Thiamine diphosphate is bound by residues Glu369 and Phe395. Glu369 serves as the catalytic Proton donor. Substrate is bound by residues His419 and Asp427. Gln431 is a binding site for thiamine diphosphate. A substrate-binding site is contributed by Arg477.

Belongs to the transketolase family. Homodimer. Requires Mg(2+) as cofactor. The cofactor is Ca(2+). Mn(2+) is required as a cofactor. Co(2+) serves as cofactor. It depends on thiamine diphosphate as a cofactor.

The catalysed reaction is D-sedoheptulose 7-phosphate + D-glyceraldehyde 3-phosphate = aldehydo-D-ribose 5-phosphate + D-xylulose 5-phosphate. In terms of biological role, plays an essential role in total transketolase activity and cell proliferation in cancer cells; after transfection with anti-TKTL1 siRNA, total transketolase activity dramatically decreases and proliferation was significantly inhibited in cancer cells. Plays a pivotal role in carcinogenesis. The protein is Transketolase-like protein 2 (TKTL2) of Bos taurus (Bovine).